The sequence spans 342 residues: Leucine-rich repeat-containing protein 23 (342 aa).

A compositionally biased stretch (acidic residues) spans 1 to 30 (MSDEDDLEDFETDQDDLEREDDEKETEEWE). Positions 1–42 (MSDEDDLEDFETDQDDLEREDDEKETEEWEDYRKEGEESEDW) are disordered. Residues 3 to 27 (DEDDLEDFETDQDDLEREDDEKETE) adopt a coiled-coil conformation. LRR repeat units lie at residues 91 to 112 (HLRYVDVSENHLTDLSPLNHLT), 113 to 133 (NLLWLKADGNQLRSARLNELP), 134 to 154 (YLQIASFAYNQITDTEGISHP), 155 to 176 (RLASLDLKGNRIHMVTGLDPQK), 179 to 199 (SLHTLELRGNQLNSTLGINLP), 200 to 221 (KLKNLFLAQNMLKKVEGLENLS), 222 to 243 (NLTTLHLRDNQIETLSGFSKEM), and 245 to 266 (SLQYLNLRGNMVADLGELAKLR). Residues 207–342 (AQNMLKKVEG…PESELDQSST (136 aa)) form an interaction with RSPH9 region. In terms of domain architecture, LRRCT spans 279–317 (NPCTDENDYRQEALVQIAHLERLDKEFYEEEERAEADEI). The stretch at 306–332 (YEEEERAEADEIRQRMKEEQEQEAEVE) forms a coiled coil. The tract at residues 307 to 342 (EEEERAEADEIRQRMKEEQEQEAEVEPESELDQSST) is disordered. The segment covering 314-324 (ADEIRQRMKEE) has biased composition (basic and acidic residues). The segment covering 325-342 (QEQEAEVEPESELDQSST) has biased composition (acidic residues).

As to quaternary structure, component of the axonemal radial spoke complex. Interacts with RSPH3. Interacts with RSPH9.

The protein localises to the cytoplasm. Its subcellular location is the cytoskeleton. The protein resides in the flagellum axoneme. Its function is as follows. Essential for sperm motility and male fertility. Plays an important role in the proper assembly of the third radial spoke (RS3) head and the bridge structure between RS2 and RS3 in the sperm flagella. The protein is Leucine-rich repeat-containing protein 23 (LRRC23) of Bos taurus (Bovine).